The following is a 977-amino-acid chain: Fc receptor-like protein 5 (977 aa).

The N-terminal stretch at 1 to 15 (MLLWVILLVLAPVSG) is a signal peptide. At 16-851 (QFARTPRPII…ANRSGPFATG (836 aa)) the chain is on the extracellular side. Ig-like C2-type domains lie at 23–101 (PIIF…LDFS), 188–271 (PFTR…SVIS), 287–374 (PVLT…LSVT), 380–463 (PVLN…KAVS), 473–556 (PVLT…EVVS), 566–651 (PILT…ISLS), 659–744 (PILT…VTLK), and 752–834 (PVLT…ETVT). Cystine bridges form between C44/C85, C211/C260, and C308/C355. N383 is a glycosylation site (N-linked (GlcNAc...) asparagine). 5 disulfide bridges follow: C401-C448, C494-C541, C587-C634, C680-C727, and C773-C819. A helical transmembrane segment spans residues 852-872 (VAGGLLSIAGLAAGALLLYCW). Over 873 to 977 (LSRKAGRKPA…LFLASSAPHR (105 aa)) the chain is Cytoplasmic. The tract at residues 879–898 (RKPASDPARSPSDSDSQEPT) is disordered. Residues 883–892 (SDPARSPSDS) are compositionally biased toward low complexity. 4 short sequence motifs (ITIM motif) span residues 897 to 902 (PTYHNV), 910 to 915 (PVYTNA), 922 to 927 (VVYSEV), and 952 to 957 (IIYSEV).

Interacts with CR2. Interacts with CD19. As to expression, expressed in marginal zone B-cells, immunoblasts, tonsillar germinal center centrocytes and in the intraepithelial and interfollicular regions of the tonsil. Expressed in many lymphoma cell lines and on hairy cell leukemia cells. Isoform 1, isoform 3, isoform 4 and isoform 5 are detected in lymph node, spleen, bone marrow, and small intestine with preponderance of isoform 3. Expressed in mature and memory B-cells and down-regulated in germinal center cells (at protein level).

The protein localises to the cell membrane. Its function is as follows. Plays an important role in B-cell response to antigen that acts both as a negative or positive coreceptor. Inhibits B-cell receptor (BCR) signaling in the absence of CR2 stimulation but engagement with CR2 and the BCR lead to a superior calcium response compared to CR2 and BCR costimulation. May be involved in B-cell development and differentiation in peripheral lymphoid organs and may be useful markers of B-cell stages. May have an immunoregulatory role in marginal zone B-cells. May play a role in fertilization. This is Fc receptor-like protein 5 (FCRL5) from Homo sapiens (Human).